Consider the following 498-residue polypeptide: NAD(P)H-quinone oxidoreductase subunit 2, chloroplastic (498 aa).

14 helical membrane-spanning segments follow: residues L18 to L38, I51 to T71, F87 to S107, L111 to A131, L134 to Y154, F168 to G188, I211 to P231, P244 to T264, W278 to V298, M306 to D326, Y337 to L357, F379 to G399, G411 to L431, and I470 to I490.

The protein belongs to the complex I subunit 2 family. As to quaternary structure, NDH is composed of at least 16 different subunits, 5 of which are encoded in the nucleus.

It is found in the plastid. It localises to the chloroplast thylakoid membrane. The catalysed reaction is a plastoquinone + NADH + (n+1) H(+)(in) = a plastoquinol + NAD(+) + n H(+)(out). The enzyme catalyses a plastoquinone + NADPH + (n+1) H(+)(in) = a plastoquinol + NADP(+) + n H(+)(out). Functionally, NDH shuttles electrons from NAD(P)H:plastoquinone, via FMN and iron-sulfur (Fe-S) centers, to quinones in the photosynthetic chain and possibly in a chloroplast respiratory chain. The immediate electron acceptor for the enzyme in this species is believed to be plastoquinone. Couples the redox reaction to proton translocation, and thus conserves the redox energy in a proton gradient. The chain is NAD(P)H-quinone oxidoreductase subunit 2, chloroplastic from Adiantum capillus-veneris (Maidenhair fern).